We begin with the raw amino-acid sequence, 508 residues long: Hydroxymethylglutaryl-CoA synthase, mitochondrial (508 aa).

A mitochondrion-targeting transit peptide spans 1–37 (MQRLLAPARRVLQVKRAMQETSLTPAHLLSAAQQRFS). N6-succinyllysine is present on lysine 52. Positions 80 and 81 each coordinate (3S)-3-hydroxy-3-methylglutaryl-CoA. 2 positions are modified to N6-acetyllysine; alternate: lysine 83 and lysine 118. An N6-succinyllysine; alternate mark is found at lysine 83 and lysine 118. Glutamate 132 functions as the Proton donor/acceptor in the catalytic mechanism. (3S)-3-hydroxy-3-methylglutaryl-CoA contacts are provided by cysteine 166, asparagine 204, and threonine 208. The active-site Acyl-thioester intermediate is cysteine 166. Lysine 221 bears the N6-succinyllysine mark. An N6-acetyllysine modification is found at lysine 243. N6-acetyllysine; alternate is present on lysine 256. An N6-succinyllysine; alternate modification is found at lysine 256. (3S)-3-hydroxy-3-methylglutaryl-CoA is bound by residues serine 258 and histidine 301. The Proton donor/acceptor role is filled by histidine 301. Position 306 is an N6-acetyllysine (lysine 306). Lysine 310 is a binding site for (3S)-3-hydroxy-3-methylglutaryl-CoA. 2 positions are modified to N6-acetyllysine; alternate: lysine 310 and lysine 327. N6-succinyllysine; alternate is present on residues lysine 310 and lysine 327. Residue lysine 333 is modified to N6-succinyllysine. N6-acetyllysine; alternate occurs at positions 342, 350, 354, and 358. N6-succinyllysine; alternate is present on residues lysine 342, lysine 350, lysine 354, and lysine 358. (3S)-3-hydroxy-3-methylglutaryl-CoA is bound by residues asparagine 380 and serine 414. Lysine 427 bears the N6-acetyllysine mark. The residue at position 433 (serine 433) is a Phosphoserine. Lysine 437 carries the post-translational modification N6-acetyllysine. Phosphoserine is present on serine 440. Residue lysine 447 is modified to N6-acetyllysine; alternate. The residue at position 447 (lysine 447) is an N6-succinyllysine; alternate. Serine 456 carries the post-translational modification Phosphoserine. Lysine 473 is modified (N6-acetyllysine; alternate). Lysine 473 carries the N6-succinyllysine; alternate modification. Serine 477 is modified (phosphoserine).

Belongs to the thiolase-like superfamily. HMG-CoA synthase family. In terms of assembly, homodimer. Acetylation of Lys-427 is observed in liver mitochondria from fasted mice but not from fed mice. Post-translationally, succinylated. Desuccinylated by SIRT5. Succinylation, at least at Lys-83 and Lys-310, inhibits the enzymatic activity. In terms of tissue distribution, liver and kidney.

It is found in the mitochondrion. It catalyses the reaction acetoacetyl-CoA + acetyl-CoA + H2O = (3S)-3-hydroxy-3-methylglutaryl-CoA + CoA + H(+). Its pathway is metabolic intermediate biosynthesis; (R)-mevalonate biosynthesis; (R)-mevalonate from acetyl-CoA: step 2/3. Catalyzes the first irreversible step in ketogenesis, condensing acetyl-CoA to acetoacetyl-CoA to form HMG-CoA, which is converted by HMG-CoA reductase (HMGCR) into mevalonate. In Mus musculus (Mouse), this protein is Hydroxymethylglutaryl-CoA synthase, mitochondrial (Hmgcs2).